The following is a 249-amino-acid chain: Probable transcriptional regulatory protein IL1088 (249 aa).

This sequence belongs to the TACO1 family.

The protein resides in the cytoplasm. This is Probable transcriptional regulatory protein IL1088 from Idiomarina loihiensis (strain ATCC BAA-735 / DSM 15497 / L2-TR).